The primary structure comprises 236 residues: uncharacterized protein (236 aa).

Disordered regions lie at residues 1-48, 67-122, and 134-192; these read MHLR…RTFS, VHTP…HSPR, and KLHP…PNNT. Residues 85–99 show a composition bias toward basic residues; it reads RAHRTAKHPARRQSC. A compositionally biased stretch (pro residues) spans 180-189; it reads PSPAIKPSPP.

This is an uncharacterized protein from Encephalitozoon cuniculi (strain GB-M1) (Microsporidian parasite).